The sequence spans 347 residues: D-alanine--D-alanine ligase (347 aa).

Residues 131 to 333 (KRVLESAGIA…YPELIERLVD (203 aa)) enclose the ATP-grasp domain. 161–216 (EEKLAYPVFTKPSNMGSSVGISKSENQEELRQALKLAFRYDSRVLVEQGVNAREIE) lines the ATP pocket. Mg(2+) contacts are provided by Asp287, Glu300, and Asn302.

The protein belongs to the D-alanine--D-alanine ligase family. Mg(2+) serves as cofactor. It depends on Mn(2+) as a cofactor.

The protein localises to the cytoplasm. It carries out the reaction 2 D-alanine + ATP = D-alanyl-D-alanine + ADP + phosphate + H(+). The protein operates within cell wall biogenesis; peptidoglycan biosynthesis. Its function is as follows. Cell wall formation. In Streptococcus pneumoniae (strain JJA), this protein is D-alanine--D-alanine ligase.